Here is a 437-residue protein sequence, read N- to C-terminus: Methylenetetrahydrofolate--tRNA-(uracil-5-)-methyltransferase TrmFO (437 aa).

Residue 10-15 coordinates FAD; the sequence is GAGLAG.

Belongs to the MnmG family. TrmFO subfamily. It depends on FAD as a cofactor.

The protein localises to the cytoplasm. It catalyses the reaction uridine(54) in tRNA + (6R)-5,10-methylene-5,6,7,8-tetrahydrofolate + NADH + H(+) = 5-methyluridine(54) in tRNA + (6S)-5,6,7,8-tetrahydrofolate + NAD(+). The enzyme catalyses uridine(54) in tRNA + (6R)-5,10-methylene-5,6,7,8-tetrahydrofolate + NADPH + H(+) = 5-methyluridine(54) in tRNA + (6S)-5,6,7,8-tetrahydrofolate + NADP(+). Its function is as follows. Catalyzes the folate-dependent formation of 5-methyl-uridine at position 54 (M-5-U54) in all tRNAs. This chain is Methylenetetrahydrofolate--tRNA-(uracil-5-)-methyltransferase TrmFO, found in Lysinibacillus sphaericus (strain C3-41).